A 130-amino-acid chain; its full sequence is uncharacterized protein (130 aa).

Residues 48–130 (RGYWPQGPPP…LIAAMEEDER (83 aa)) form a disordered region. The span at 80-107 (GGDGGGDAGAGPSGVAGTAAGGAGGDGA) shows a compositional bias: gly residues.

This is an uncharacterized protein from Aotus trivirgatus (Three-striped night monkey).